We begin with the raw amino-acid sequence, 394 residues long: Elongation factor Tu (394 aa).

The tr-type G domain occupies 10 to 204 (KPHVNIGTIG…AVDSYIPQPI (195 aa)). Positions 19-26 (GHVDHGKT) are G1. 19–26 (GHVDHGKT) provides a ligand contact to GTP. Residue Thr26 participates in Mg(2+) binding. The tract at residues 60–64 (GITIS) is G2. The segment at 81-84 (DCPG) is G3. Residues 81–85 (DCPGH) and 136–139 (NKVD) contribute to the GTP site. The tract at residues 136-139 (NKVD) is G4. Residues 174-176 (SAL) are G5.

This sequence belongs to the TRAFAC class translation factor GTPase superfamily. Classic translation factor GTPase family. EF-Tu/EF-1A subfamily. As to quaternary structure, monomer.

Its subcellular location is the cytoplasm. The enzyme catalyses GTP + H2O = GDP + phosphate + H(+). GTP hydrolase that promotes the GTP-dependent binding of aminoacyl-tRNA to the A-site of ribosomes during protein biosynthesis. This Rickettsia typhi (strain ATCC VR-144 / Wilmington) protein is Elongation factor Tu.